We begin with the raw amino-acid sequence, 134 residues long: Interleukin-4 (134 aa).

A signal peptide spans 1 to 23 (MGLTYQLLPALVCLLACTSFIQG). Disulfide bonds link Cys24–Cys133 and Cys48–Cys88. A glycan (N-linked (GlcNAc...) asparagine) is linked at Asn38. N-linked (GlcNAc...) asparagine glycosylation is present at Asn101.

It belongs to the IL-4/IL-13 family.

The protein resides in the secreted. In terms of biological role, participates in at least several B-cell activation processes as well as of other cell types. It is a costimulator of DNA-synthesis. It induces the expression of class II MHC molecules on resting B-cells. It enhances both secretion and cell surface expression of IgE and IgG1. It also regulates the expression of the low affinity Fc receptor for IgE (CD23) on both lymphocytes and monocytes. Positively regulates IL31RA expression in macrophages. Stimulates autophagy in dendritic cells by interfering with mTORC1 signaling and through the induction of RUFY4. The sequence is that of Interleukin-4 (IL4) from Equus caballus (Horse).